We begin with the raw amino-acid sequence, 657 residues long: Pentatricopeptide repeat-containing protein At1g11710, mitochondrial (657 aa).

A mitochondrion-targeting transit peptide spans 1–74 (MFGHVFSRRT…REFRSSPKLA (74 aa)). PPR repeat units lie at residues 147-181 (SPDVFDSLVRACTQNGDAQGAYEVIEQTRAEGFCV), 182-216 (SVHALNNFMGCLLNVNEIDRFWKVYKEMDSLGYVE), 217-251 (NVNTFNLVIYSFCKESKLFEALSVFYRMLKCGVWP), 252-282 (NVVSFNMMIDGACKTGDMRFALQLLGKMGMM), 290-324 (NAVTYNSVINGFCKAGRLDLAERIRGDMVKSGVDC), 325-359 (NERTYGALVDAYGRAGSSDEALRLCDEMTSKGLVV), 360-394 (NTVIYNSIVYWLFMEGDIEGAMSVLRDMNSKNMQI), 395-429 (DRFTQAIVVRGLCRNGYVKEAVEFQRQISEKKLVE), 430-464 (DIVCHNTLMHHFVRDKKLACADQILGSMLVQGLSL), 465-499 (DAISFGTLIDGYLKEGKLERALEIYDGMIKMNKTS), 500-530 (NLVIYNSIVNGLSKRGMAGAAEAVVNAMEIK), 531-565 (DIVTYNTLLNESLKTGNVEEADDILSKMQKQDGEK), 568-602 (SLVTFNIMINHLCKFGSYEKAKEVLKFMVERGVVP), and 603-637 (DSITYGTLITSFSKHRSQEKVVELHDYLILQGVTP).

Belongs to the PPR family. P subfamily.

The protein resides in the mitochondrion. The protein is Pentatricopeptide repeat-containing protein At1g11710, mitochondrial of Arabidopsis thaliana (Mouse-ear cress).